The primary structure comprises 390 residues: Peroxisomal sarcosine oxidase (390 aa).

9–39 lines the FAD pocket; it reads DAIVIGAGIQGCFTAYHLAKHRKRILLLEQF. K126 bears the N6-acetyllysine mark. The residue at position 319 (C319) is an S-8alpha-FAD cysteine. Residues 388-390 carry the Microbody targeting signal motif; sequence AHL.

It belongs to the MSOX/MTOX family. It depends on FAD as a cofactor. As to expression, expressed in the liver and kidney.

The protein localises to the peroxisome. It catalyses the reaction sarcosine + O2 + H2O = formaldehyde + glycine + H2O2. The enzyme catalyses L-pipecolate + O2 = L-1-piperideine-6-carboxylate + H2O2 + H(+). Its function is as follows. Metabolizes sarcosine and L-pipecolic acid. The protein is Peroxisomal sarcosine oxidase (PIPOX) of Homo sapiens (Human).